The sequence spans 316 residues: ATP synthase gamma chain (316 aa).

This sequence belongs to the ATPase gamma chain family. In terms of assembly, F-type ATPases have 2 components, CF(1) - the catalytic core - and CF(0) - the membrane proton channel. CF(1) has five subunits: alpha(3), beta(3), gamma(1), delta(1), epsilon(1). CF(0) has three main subunits: a, b and c.

The protein resides in the cellular thylakoid membrane. Its function is as follows. Produces ATP from ADP in the presence of a proton gradient across the membrane. The gamma chain is believed to be important in regulating ATPase activity and the flow of protons through the CF(0) complex. The sequence is that of ATP synthase gamma chain from Synechococcus sp. (strain ATCC 27144 / PCC 6301 / SAUG 1402/1) (Anacystis nidulans).